The sequence spans 515 residues: Maturase K (515 aa).

Belongs to the intron maturase 2 family. MatK subfamily.

The protein resides in the plastid. The protein localises to the chloroplast. Functionally, usually encoded in the trnK tRNA gene intron. Probably assists in splicing its own and other chloroplast group II introns. In Pinus elliottii (Slash pine), this protein is Maturase K.